The primary structure comprises 83 residues: Sec-independent protein translocase protein TatA (83 aa).

The chain crosses the membrane as a helical span at residues 1-21; it reads MGNMGIWQLLIIAVIVILLFG. 2 stretches are compositionally biased toward basic and acidic residues: residues 47 to 57 and 71 to 83; these read EEKKALEETAS and AEKKTETKDKEQV. The interval 47-83 is disordered; that stretch reads EEKKALEETASEKATPSVEKTAPNAEKKTETKDKEQV.

The protein belongs to the TatA/E family. As to quaternary structure, the Tat system comprises two distinct complexes: a TatABC complex, containing multiple copies of TatA, TatB and TatC subunits, and a separate TatA complex, containing only TatA subunits. Substrates initially bind to the TatABC complex, which probably triggers association of the separate TatA complex to form the active translocon.

It localises to the cell inner membrane. Part of the twin-arginine translocation (Tat) system that transports large folded proteins containing a characteristic twin-arginine motif in their signal peptide across membranes. TatA could form the protein-conducting channel of the Tat system. The sequence is that of Sec-independent protein translocase protein TatA from Shewanella woodyi (strain ATCC 51908 / MS32).